The sequence spans 346 residues: Ribosomal RNA small subunit methyltransferase H (346 aa).

S-adenosyl-L-methionine is bound by residues 53–55 (GGY), aspartate 70, phenylalanine 97, aspartate 114, and glutamine 121.

The protein belongs to the methyltransferase superfamily. RsmH family.

The protein localises to the cytoplasm. It catalyses the reaction cytidine(1402) in 16S rRNA + S-adenosyl-L-methionine = N(4)-methylcytidine(1402) in 16S rRNA + S-adenosyl-L-homocysteine + H(+). In terms of biological role, specifically methylates the N4 position of cytidine in position 1402 (C1402) of 16S rRNA. This chain is Ribosomal RNA small subunit methyltransferase H, found in Bartonella henselae (strain ATCC 49882 / DSM 28221 / CCUG 30454 / Houston 1) (Rochalimaea henselae).